The following is a 763-amino-acid chain: uncharacterized protein (763 aa).

Positions 380–607 (DSVLNPFNTN…YNIKVITMRL (228 aa)) constitute a TR mART core domain. The helical transmembrane segment at 684 to 700 (SYVSIYALLCPLLTNIY) threads the bilayer.

It is found in the membrane. This is an uncharacterized protein from Acanthamoeba polyphaga mimivirus (APMV).